Here is a 154-residue protein sequence, read N- to C-terminus: Snaclec dabocetin subunit alpha (154 aa).

The first 23 residues, 1-23 (MGRFISVSFGLLVVFLSLSGTGA), serve as a signal peptide directing secretion. 3 disulfides stabilise this stretch: Cys25-Cys36, Cys53-Cys148, and Cys123-Cys140. The 118-residue stretch at 32 to 149 (HEGHCYKVFK…CGDKNPFICK (118 aa)) folds into the C-type lectin domain.

This sequence belongs to the snaclec family. In terms of assembly, heterodimer of subunits alpha and beta; disulfide-linked. In terms of tissue distribution, expressed by the venom gland.

Its subcellular location is the secreted. Inhibits ristocetin-induced platelet aggregation via binding to platelet glycoprotein Ibalpha (GP1BA). The sequence is that of Snaclec dabocetin subunit alpha from Daboia siamensis (Eastern Russel's viper).